The primary structure comprises 226 residues: Urease accessory protein UreE (226 aa).

Residues 192–226 (PHGSGLHIHSIHSHGDGHSHDHDHSHGDHDSDHKH) form a disordered region. The span at 204–226 (SHGDGHSHDHDHSHGDHDSDHKH) shows a compositional bias: basic and acidic residues.

The protein belongs to the UreE family.

It localises to the cytoplasm. Functionally, involved in urease metallocenter assembly. Binds nickel. Probably functions as a nickel donor during metallocenter assembly. This chain is Urease accessory protein UreE, found in Yersinia intermedia.